Consider the following 343-residue polypeptide: Holliday junction branch migration complex subunit RuvB (343 aa).

The segment at 1–181 (MDRIVEIEKV…FGMQFRLQFY (181 aa)) is large ATPase domain (RuvB-L). Residues Leu20, Arg21, Gly62, Lys65, Thr66, Thr67, 128-130 (EDF), Arg171, Tyr181, and Arg218 each bind ATP. Thr66 lines the Mg(2+) pocket. Positions 182–252 (TDNELARIIS…RAKSSLDSLG (71 aa)) are small ATPAse domain (RuvB-S). The interval 255 to 343 (DLGFDEMDLK…EKQNKGLFNE (89 aa)) is head domain (RuvB-H). Arg308 and Arg313 together coordinate DNA.

The protein belongs to the RuvB family. As to quaternary structure, homohexamer. Forms an RuvA(8)-RuvB(12)-Holliday junction (HJ) complex. HJ DNA is sandwiched between 2 RuvA tetramers; dsDNA enters through RuvA and exits via RuvB. An RuvB hexamer assembles on each DNA strand where it exits the tetramer. Each RuvB hexamer is contacted by two RuvA subunits (via domain III) on 2 adjacent RuvB subunits; this complex drives branch migration. In the full resolvosome a probable DNA-RuvA(4)-RuvB(12)-RuvC(2) complex forms which resolves the HJ.

Its subcellular location is the cytoplasm. It carries out the reaction ATP + H2O = ADP + phosphate + H(+). Its function is as follows. The RuvA-RuvB-RuvC complex processes Holliday junction (HJ) DNA during genetic recombination and DNA repair, while the RuvA-RuvB complex plays an important role in the rescue of blocked DNA replication forks via replication fork reversal (RFR). RuvA specifically binds to HJ cruciform DNA, conferring on it an open structure. The RuvB hexamer acts as an ATP-dependent pump, pulling dsDNA into and through the RuvAB complex. RuvB forms 2 homohexamers on either side of HJ DNA bound by 1 or 2 RuvA tetramers; 4 subunits per hexamer contact DNA at a time. Coordinated motions by a converter formed by DNA-disengaged RuvB subunits stimulates ATP hydrolysis and nucleotide exchange. Immobilization of the converter enables RuvB to convert the ATP-contained energy into a lever motion, pulling 2 nucleotides of DNA out of the RuvA tetramer per ATP hydrolyzed, thus driving DNA branch migration. The RuvB motors rotate together with the DNA substrate, which together with the progressing nucleotide cycle form the mechanistic basis for DNA recombination by continuous HJ branch migration. Branch migration allows RuvC to scan DNA until it finds its consensus sequence, where it cleaves and resolves cruciform DNA. The chain is Holliday junction branch migration complex subunit RuvB from Campylobacter fetus subsp. fetus (strain 82-40).